The chain runs to 172 residues: Adenine phosphoribosyltransferase (172 aa).

Belongs to the purine/pyrimidine phosphoribosyltransferase family. As to quaternary structure, homodimer.

Its subcellular location is the cytoplasm. The catalysed reaction is AMP + diphosphate = 5-phospho-alpha-D-ribose 1-diphosphate + adenine. The protein operates within purine metabolism; AMP biosynthesis via salvage pathway; AMP from adenine: step 1/1. In terms of biological role, catalyzes a salvage reaction resulting in the formation of AMP, that is energically less costly than de novo synthesis. The sequence is that of Adenine phosphoribosyltransferase from Rippkaea orientalis (strain PCC 8801 / RF-1) (Cyanothece sp. (strain PCC 8801)).